Reading from the N-terminus, the 339-residue chain is Ferrochelatase (339 aa).

Fe cation contacts are provided by His209 and Glu290.

The protein belongs to the ferrochelatase family.

Its subcellular location is the cytoplasm. The enzyme catalyses heme b + 2 H(+) = protoporphyrin IX + Fe(2+). Its pathway is porphyrin-containing compound metabolism; protoheme biosynthesis; protoheme from protoporphyrin-IX: step 1/1. Functionally, catalyzes the ferrous insertion into protoporphyrin IX. The chain is Ferrochelatase from Rhizobium meliloti (strain 1021) (Ensifer meliloti).